We begin with the raw amino-acid sequence, 343 residues long: tRNA N6-adenosine threonylcarbamoyltransferase (343 aa).

2 residues coordinate Fe cation: His115 and His119. Residues 137–141 (LVSGG), Asp170, Gly183, Asp187, and Asn276 contribute to the substrate site. Asp306 is a binding site for Fe cation.

The protein belongs to the KAE1 / TsaD family. Fe(2+) is required as a cofactor.

It localises to the cytoplasm. The catalysed reaction is L-threonylcarbamoyladenylate + adenosine(37) in tRNA = N(6)-L-threonylcarbamoyladenosine(37) in tRNA + AMP + H(+). Its function is as follows. Required for the formation of a threonylcarbamoyl group on adenosine at position 37 (t(6)A37) in tRNAs that read codons beginning with adenine. Is involved in the transfer of the threonylcarbamoyl moiety of threonylcarbamoyl-AMP (TC-AMP) to the N6 group of A37, together with TsaE and TsaB. TsaD likely plays a direct catalytic role in this reaction. The sequence is that of tRNA N6-adenosine threonylcarbamoyltransferase from Limosilactobacillus reuteri (strain DSM 20016) (Lactobacillus reuteri).